Here is a 510-residue protein sequence, read N- to C-terminus: NAD(P)H-quinone oxidoreductase subunit 2 A, chloroplastic (510 aa).

The next 13 membrane-spanning stretches (helical) occupy residues 24 to 44 (LLLF…GLIL), 57 to 77 (IPWL…ALLF), 99 to 119 (IFQF…VEYI), 124 to 144 (MAIT…MFLC), 149 to 169 (LITI…LSGY), 183 to 203 (YLLM…WLYG), 227 to 247 (PGIS…LSPA), 295 to 315 (WHLL…LIAI), 323 to 343 (MLAY…IVGD), 354 to 374 (YMLF…SFGL), 395 to 415 (ALSL…AGFF), 418 to 438 (LHLF…IGLL), and 484 to 504 (MIVC…IIAI).

The protein belongs to the complex I subunit 2 family. In terms of assembly, NDH is composed of at least 16 different subunits, 5 of which are encoded in the nucleus.

The protein localises to the plastid. The protein resides in the chloroplast thylakoid membrane. The catalysed reaction is a plastoquinone + NADH + (n+1) H(+)(in) = a plastoquinol + NAD(+) + n H(+)(out). It carries out the reaction a plastoquinone + NADPH + (n+1) H(+)(in) = a plastoquinol + NADP(+) + n H(+)(out). Functionally, NDH shuttles electrons from NAD(P)H:plastoquinone, via FMN and iron-sulfur (Fe-S) centers, to quinones in the photosynthetic chain and possibly in a chloroplast respiratory chain. The immediate electron acceptor for the enzyme in this species is believed to be plastoquinone. Couples the redox reaction to proton translocation, and thus conserves the redox energy in a proton gradient. In Carica papaya (Papaya), this protein is NAD(P)H-quinone oxidoreductase subunit 2 A, chloroplastic.